We begin with the raw amino-acid sequence, 617 residues long: Protein DWARF AND LOW-TILLERING (617 aa).

Disordered stretches follow at residues 29 to 92 (KRGS…HDED) and 159 to 206 (PSLA…GVPA). Residues 171–187 (KSPSDSSSSSGTDGGSS) are compositionally biased toward low complexity. The GRAS domain occupies 208 to 594 (GQAEREALEL…QPLYTVTAWT (387 aa)). Residues 215-295 (LELVRALTAC…LTDDAFGGGD (81 aa)) form a leucine repeat I (LRI) region. The tract at residues 301 to 366 (LRILNAITPI…VPPAHVRITG (66 aa)) is VHIID. Residues 332-336 (VHVID) carry the VHIID motif. The leucine repeat II (LRII) stretch occupies residues 376–408 (ETGARLARVAAALGLAFEFHAVVDRLEDVRLWM). A PFYRE region spans residues 417-508 (VAVNCVLAMH…EEMFAREIRN (92 aa)). An SAW region spans residues 511 to 594 (AFEGPERFER…QPLYTVTAWT (84 aa)). A disordered region spans residues 596-617 (AGDGAGGSTVSASTTASHSQQS). Positions 603–617 (STVSASTTASHSQQS) are enriched in low complexity.

It belongs to the GRAS family. As to quaternary structure, interacts with GSK2. Interacts with SMOS1 (via C-terminus). Phosphorylated on serine and threonine residues by GSK2. Dephosphorylated during response to brassinosteroid. As to expression, expressed in the shoot apical meristem (SAM) and elongating cells of young seedlings. Expressed in leaf joints, culms, internodes, stems, young panicles, primary roots and lateral roots.

Its subcellular location is the nucleus. Functionally, probable transcription factor that acts as a positive regulator of brassinosteroid (BR) signaling. Functions downstream of BRI1 and GSK2 to modulate BR responses. Acts as a direct target of GSK2 kinase to mediate BR responses. Involved in feedback inhibition of BR biosynthetic genes. Repressed by BZR1. Cooperatively functions in a transactivating complex with SMOS1 to enhance the transcription of the SMOS1 target PHI-1, and regulate plant organ size. Interaction between SMOS1 and DLT is a crosstalk point for auxin and brassinosteroid signaling. This Oryza sativa subsp. japonica (Rice) protein is Protein DWARF AND LOW-TILLERING.